The following is a 127-amino-acid chain: MRHRKSGRKLNRNSSHRQAMFRNMAVSLLEHEAIKTTLPKAKELRRVAEPLITLAKEDSVANRRLAFDRTRSKEMVGKLFNELGPRYQERPGGYIRILKMGFRAGDNAPMAYVELVDRPELVDADEE.

This sequence belongs to the bacterial ribosomal protein bL17 family. Part of the 50S ribosomal subunit. Contacts protein L32.

In Alcanivorax borkumensis (strain ATCC 700651 / DSM 11573 / NCIMB 13689 / SK2), this protein is Large ribosomal subunit protein bL17.